The chain runs to 174 residues: Disulfide bond formation protein B (174 aa).

Residues 1 to 12 (MLNWIDTAPRRI) lie on the Cytoplasmic side of the membrane. A helical transmembrane segment spans residues 13-29 (LALISAACVAMLAFGMY). Over 30 to 47 (LQHVVGLEPCPMCIVQRY) the chain is Periplasmic. A disulfide bridge connects residues cysteine 39 and cysteine 42. The helical transmembrane segment at 48–64 (ALIGVAVFAGLASARGQ) threads the bilayer. Residues 65–69 (KGWWM) are Cytoplasmic-facing. Residues 70-87 (TWSVLALVAAGFGAFVAA) form a helical membrane-spanning segment. Topologically, residues 88–143 (RQSWLQWYPPEIATCGRDFYGMIENYPISRAIPMIFRGSGDCTAVDWTFLGGSIAN) are periplasmic. A disulfide bridge connects residues cysteine 102 and cysteine 129. Residues 144–162 (WSFVWFLLFAVLLLVLLVR) form a helical membrane-spanning segment. At 163–174 (GGRGAPDTLARA) the chain is on the cytoplasmic side.

It belongs to the DsbB family.

Its subcellular location is the cell inner membrane. In terms of biological role, required for disulfide bond formation in some periplasmic proteins. Acts by oxidizing the DsbA protein. This chain is Disulfide bond formation protein B, found in Acidovorax sp. (strain JS42).